The sequence spans 256 residues: Isoprenyl transferase (256 aa).

The active site involves Asp-33. Asp-33 serves as a coordination point for Mg(2+). Substrate-binding positions include 34 to 37, Trp-38, Arg-46, His-50, and 78 to 80; these read GNGR and STE. Asn-81 acts as the Proton acceptor in catalysis. Substrate-binding positions include Trp-82, Arg-84, Arg-201, and 207-209; that span reads RIS. Mg(2+) is bound at residue Glu-220.

Belongs to the UPP synthase family. Homodimer. Requires Mg(2+) as cofactor.

In terms of biological role, catalyzes the condensation of isopentenyl diphosphate (IPP) with allylic pyrophosphates generating different type of terpenoids. The chain is Isoprenyl transferase from Staphylococcus aureus (strain Mu50 / ATCC 700699).